Reading from the N-terminus, the 215-residue chain is Large ribosomal subunit protein uL3 (215 aa).

The tract at residues 136–155 (GVSISHRSHGSTGQRQDPGK) is disordered. Glutamine 151 carries the N5-methylglutamine modification.

It belongs to the universal ribosomal protein uL3 family. In terms of assembly, part of the 50S ribosomal subunit. Forms a cluster with proteins L14 and L19. Methylated by PrmB.

In terms of biological role, one of the primary rRNA binding proteins, it binds directly near the 3'-end of the 23S rRNA, where it nucleates assembly of the 50S subunit. The polypeptide is Large ribosomal subunit protein uL3 (Rickettsia africae (strain ESF-5)).